A 124-amino-acid chain; its full sequence is Small ribosomal subunit protein uS12 (124 aa).

A disordered region spans residues 1 to 28; the sequence is MPTINQLVRKGRTPKVSKTKAPALKGSP. Over residues 9–18 the composition is skewed to basic residues; the sequence is RKGRTPKVSK. D89 is subject to 3-methylthioaspartic acid.

The protein belongs to the universal ribosomal protein uS12 family. As to quaternary structure, part of the 30S ribosomal subunit. Contacts proteins S8 and S17. May interact with IF1 in the 30S initiation complex.

Functionally, with S4 and S5 plays an important role in translational accuracy. Interacts with and stabilizes bases of the 16S rRNA that are involved in tRNA selection in the A site and with the mRNA backbone. Located at the interface of the 30S and 50S subunits, it traverses the body of the 30S subunit contacting proteins on the other side and probably holding the rRNA structure together. The combined cluster of proteins S8, S12 and S17 appears to hold together the shoulder and platform of the 30S subunit. The sequence is that of Small ribosomal subunit protein uS12 from Paenarthrobacter aurescens (strain TC1).